A 326-amino-acid polypeptide reads, in one-letter code: tRNA-cytidine(32) 2-sulfurtransferase (326 aa).

The short motif at 63 to 68 is the PP-loop motif element; sequence SGGKDS. Positions 138, 141, and 229 each coordinate [4Fe-4S] cluster.

The protein belongs to the TtcA family. In terms of assembly, homodimer. Requires Mg(2+) as cofactor. It depends on [4Fe-4S] cluster as a cofactor.

It is found in the cytoplasm. The catalysed reaction is cytidine(32) in tRNA + S-sulfanyl-L-cysteinyl-[cysteine desulfurase] + AH2 + ATP = 2-thiocytidine(32) in tRNA + L-cysteinyl-[cysteine desulfurase] + A + AMP + diphosphate + H(+). It participates in tRNA modification. Functionally, catalyzes the ATP-dependent 2-thiolation of cytidine in position 32 of tRNA, to form 2-thiocytidine (s(2)C32). The sulfur atoms are provided by the cysteine/cysteine desulfurase (IscS) system. This is tRNA-cytidine(32) 2-sulfurtransferase from Leptothrix cholodnii (strain ATCC 51168 / LMG 8142 / SP-6) (Leptothrix discophora (strain SP-6)).